Here is a 430-residue protein sequence, read N- to C-terminus: Tol-Pal system protein TolB (430 aa).

An N-terminal signal peptide occupies residues 1-21 (MKQAFRVALGFLVLWASVLHA).

This sequence belongs to the TolB family. In terms of assembly, the Tol-Pal system is composed of five core proteins: the inner membrane proteins TolA, TolQ and TolR, the periplasmic protein TolB and the outer membrane protein Pal. They form a network linking the inner and outer membranes and the peptidoglycan layer.

It is found in the periplasm. Functionally, part of the Tol-Pal system, which plays a role in outer membrane invagination during cell division and is important for maintaining outer membrane integrity. TolB occupies a key intermediary position in the Tol-Pal system because it communicates directly with both membrane-embedded components, Pal in the outer membrane and TolA in the inner membrane. This Yersinia enterocolitica serotype O:8 / biotype 1B (strain NCTC 13174 / 8081) protein is Tol-Pal system protein TolB.